Reading from the N-terminus, the 379-residue chain is UDP-4-amino-4-deoxy-L-arabinose--oxoglutarate aminotransferase (379 aa).

An N6-(pyridoxal phosphate)lysine modification is found at K182.

It belongs to the DegT/DnrJ/EryC1 family. ArnB subfamily. Homodimer. Pyridoxal 5'-phosphate serves as cofactor.

It catalyses the reaction UDP-4-amino-4-deoxy-beta-L-arabinose + 2-oxoglutarate = UDP-beta-L-threo-pentopyranos-4-ulose + L-glutamate. It functions in the pathway nucleotide-sugar biosynthesis; UDP-4-deoxy-4-formamido-beta-L-arabinose biosynthesis; UDP-4-deoxy-4-formamido-beta-L-arabinose from UDP-alpha-D-glucuronate: step 2/3. Its pathway is bacterial outer membrane biogenesis; lipopolysaccharide biosynthesis. Functionally, catalyzes the conversion of UDP-4-keto-arabinose (UDP-Ara4O) to UDP-4-amino-4-deoxy-L-arabinose (UDP-L-Ara4N). The modified arabinose is attached to lipid A and is required for resistance to polymyxin and cationic antimicrobial peptides. The chain is UDP-4-amino-4-deoxy-L-arabinose--oxoglutarate aminotransferase from Escherichia fergusonii (strain ATCC 35469 / DSM 13698 / CCUG 18766 / IAM 14443 / JCM 21226 / LMG 7866 / NBRC 102419 / NCTC 12128 / CDC 0568-73).